A 243-amino-acid polypeptide reads, in one-letter code: VQ motif-containing protein 33 (243 aa).

A compositionally biased stretch (polar residues) spans Met-1–Gln-16. The tract at residues Met-1 to Thr-49 is disordered. Residues Phe-59–Gly-68 carry the VQ motif. Disordered stretches follow at residues Ser-69 to Pro-98 and Phe-138 to Ile-162. Residues Ser-83 and Ser-95 each carry the phosphoserine modification. Positions Pro-84–Pro-98 are enriched in polar residues. Thr-139 carries the post-translational modification Phosphothreonine. Phosphoserine is present on residues Ser-148, Ser-152, Ser-165, Ser-167, and Ser-178. A compositionally biased stretch (low complexity) spans Pro-149 to Ile-162. Positions Val-180–Ser-243 are disordered. Thr-181 bears the Phosphothreonine mark. Residues Asn-191–Ser-201 are compositionally biased toward polar residues. Residues Ser-218 and Ser-221 each carry the phosphoserine modification. Thr-222 carries the post-translational modification Phosphothreonine. Ser-238 carries the phosphoserine modification.

In terms of processing, phosphorylated on serine and threonine residues by MPK6.

The protein localises to the nucleus. In terms of biological role, may modulate WRKY transcription factor activities. The sequence is that of VQ motif-containing protein 33 from Arabidopsis thaliana (Mouse-ear cress).